The chain runs to 452 residues: Eukaryotic translation initiation factor 3 subunit E (452 aa).

In terms of domain architecture, PCI spans 257 to 426; that stretch reads TDLFFSPAYI…GTVIMNHPPQ (170 aa).

This sequence belongs to the eIF-3 subunit E family. In terms of assembly, component of the eukaryotic translation initiation factor 3 (eIF-3) complex.

It localises to the cytoplasm. Its function is as follows. Component of the eukaryotic translation initiation factor 3 (eIF-3) complex, which is involved in protein synthesis of a specialized repertoire of mRNAs and, together with other initiation factors, stimulates binding of mRNA and methionyl-tRNAi to the 40S ribosome. The eIF-3 complex specifically targets and initiates translation of a subset of mRNAs involved in cell proliferation. This chain is Eukaryotic translation initiation factor 3 subunit E (int6), found in Aspergillus niger (strain ATCC MYA-4892 / CBS 513.88 / FGSC A1513).